An 832-amino-acid polypeptide reads, in one-letter code: DEAD-box ATP-dependent RNA helicase 13 (832 aa).

Residues 1 to 12 show a composition bias toward pro residues; that stretch reads MAAAPPPPPPPQ. Disordered regions lie at residues 1–59 and 91–173; these read MAAA…TMVE and VEDL…DDNV. The segment covering 29-42 has biased composition (basic residues); that stretch reads RKGKKSRGAKKPRR. Low complexity predominate over residues 43 to 55; it reads AAAAAAASTSSAG. Over residues 105–114 the composition is skewed to basic residues; sequence QKKKKRKKRK. Over residues 128 to 137 the composition is skewed to acidic residues; that stretch reads LVVECEEEGE. Positions 141–155 are enriched in basic residues; the sequence is KRVKKKRRSRKKRKV. Basic and acidic residues predominate over residues 156 to 167; it reads KEMEEKMESKED. Residues 198–226 carry the Q motif motif; the sequence is YAWRELRLHPLLITAVRRLGFKEPTPIQK. Residues 230 to 447 form the Helicase ATP-binding domain; sequence PAAAHQGKDV…KLKRGLVTAK (218 aa). 243 to 250 lines the ATP pocket; that stretch reads AETGSGKT. The DEAD box motif lies at 371 to 374; the sequence is DEAD. The Helicase C-terminal domain maps to 484–645; sequence KLEESFIECS…QFPVDHAYMP (162 aa). Positions 800-832 are disordered; it reads RRLAENWRRKKQKEKKSTREQKRKEKRIAKERD. Positions 814-832 are enriched in basic and acidic residues; sequence KKSTREQKRKEKRIAKERD.

Belongs to the DEAD box helicase family. DDX24/MAK5 subfamily.

It catalyses the reaction ATP + H2O = ADP + phosphate + H(+). The polypeptide is DEAD-box ATP-dependent RNA helicase 13 (Oryza sativa subsp. japonica (Rice)).